We begin with the raw amino-acid sequence, 432 residues long: 5'-deoxyadenosine deaminase (432 aa).

Residues H63 and H65 each contribute to the Zn(2+) site. Substrate is bound by residues E92 and H184. A Zn(2+)-binding site is contributed by H211. Residues E214 and D299 each coordinate substrate. D299 serves as a coordination point for Zn(2+).

Belongs to the metallo-dependent hydrolases superfamily. MTA/SAH deaminase family. As to quaternary structure, homotetramer. It depends on Zn(2+) as a cofactor.

The enzyme catalyses 5'-deoxyadenosine + H2O + H(+) = 5'-deoxyinosine + NH4(+). It catalyses the reaction S-adenosyl-L-homocysteine + H2O + H(+) = S-inosyl-L-homocysteine + NH4(+). It carries out the reaction S-methyl-5'-thioadenosine + H2O + H(+) = S-methyl-5'-thioinosine + NH4(+). The catalysed reaction is adenosine + H2O + H(+) = inosine + NH4(+). It functions in the pathway amino-acid biosynthesis; S-adenosyl-L-methionine biosynthesis. Its function is as follows. Catalyzes the deamination of three SAM-derived enzymatic products, namely 5'-deoxyadenosine, S-adenosyl-L-homocysteine, and 5'-methylthioadenosine, to produce the inosine analogs. Can also deaminate adenosine. The preferred substrate for this enzyme is 5'-deoxyadenosine, but all these substrates are efficiently deaminated. Likely functions in a S-adenosyl-L-methionine (SAM) recycling pathway from S-adenosyl-L-homocysteine (SAH) produced from SAM-dependent methylation reactions. May also be involved in the recycling of 5'-deoxyadenosine, whereupon the 5'-deoxyribose moiety of 5'-deoxyinosine is further metabolized to deoxyhexoses used for the biosynthesis of aromatic amino acids in methanogens. The protein is 5'-deoxyadenosine deaminase of Methanosarcina mazei (strain ATCC BAA-159 / DSM 3647 / Goe1 / Go1 / JCM 11833 / OCM 88) (Methanosarcina frisia).